The chain runs to 28 residues: Chassatide C11 (28 aa).

Intrachain disulfides connect Cys-3-Cys-19, Cys-7-Cys-21, and Cys-12-Cys-26. Position 16 is a methionine sulfoxide; in form chassatide chaC11A (Met-16).

The protein belongs to the cyclotide family. Bracelet subfamily. Expressed in fruit, pedicel and stem but not in leaf and root (at protein level).

In terms of biological role, chassatide C11: Probably participates in a plant defense mechanism. Active against E.coli ATCC 25922 (MIC=8.5 uM) but not against S.aureus ATCC 12600 or S.epidermidis ATCC 14990. Has cytotoxic and hemolytic activity. Chassatide C11A: Probably participates in a plant defense mechanism. Has no activity against bacteria up to a concentration of 80 uM. Has no cytotoxic and no hemolytic activity. The protein is Chassatide C11 of Chassalia chartacea (Chassalia curviflora).